A 90-amino-acid polypeptide reads, in one-letter code: Large ribosomal subunit protein eL34 (90 aa).

Residues Cys-36, Cys-39, Cys-72, and Cys-75 each contribute to the Zn(2+) site. Residues Arg-41–Cys-72 form a disordered region.

It belongs to the eukaryotic ribosomal protein eL34 family. In terms of assembly, part of the 50S ribosomal subunit. It depends on Zn(2+) as a cofactor.

In Thermococcus kodakarensis (strain ATCC BAA-918 / JCM 12380 / KOD1) (Pyrococcus kodakaraensis (strain KOD1)), this protein is Large ribosomal subunit protein eL34.